We begin with the raw amino-acid sequence, 162 residues long: MSINATARALLLTEFVSAFFLTMRYFFQPKATINYPFEKNPISPRFRGEHALRRYPNGEERCIACKLCEAICPAQAITIEAGPRRNDGTRRTVRYDIDMVKCIYCGLCQEACPVDAIVEGPNFEFATETREELYYDKAKLLANGDRWEREIAKAIELDAPYR.

4Fe-4S ferredoxin-type domains are found at residues 52–82 (LRRY…IEAG) and 93–122 (VRYD…EGPN). Residues C62, C65, C68, C72, C102, C105, C108, and C112 each contribute to the [4Fe-4S] cluster site.

The protein belongs to the complex I 23 kDa subunit family. NDH-1 is composed of 14 different subunits. Subunits NuoA, H, J, K, L, M, N constitute the membrane sector of the complex. [4Fe-4S] cluster serves as cofactor.

The protein localises to the cell inner membrane. The enzyme catalyses a quinone + NADH + 5 H(+)(in) = a quinol + NAD(+) + 4 H(+)(out). Its function is as follows. NDH-1 shuttles electrons from NADH, via FMN and iron-sulfur (Fe-S) centers, to quinones in the respiratory chain. The immediate electron acceptor for the enzyme in this species is believed to be ubiquinone. Couples the redox reaction to proton translocation (for every two electrons transferred, four hydrogen ions are translocated across the cytoplasmic membrane), and thus conserves the redox energy in a proton gradient. The sequence is that of NADH-quinone oxidoreductase subunit I from Nitrobacter hamburgensis (strain DSM 10229 / NCIMB 13809 / X14).